A 788-amino-acid chain; its full sequence is LPS-assembly protein LptD (788 aa).

An N-terminal signal peptide occupies residues 1–23 (MSLTSRSLLATMISLALYGPAMA).

It belongs to the LptD family. Component of the lipopolysaccharide transport and assembly complex. Interacts with LptE and LptA.

It localises to the cell outer membrane. Together with LptE, is involved in the assembly of lipopolysaccharide (LPS) at the surface of the outer membrane. This is LPS-assembly protein LptD from Photobacterium profundum (strain SS9).